Here is a 296-residue protein sequence, read N- to C-terminus: MFKSGFVTIIGRPNVGKSTLLNHIMGEKLSIVSSKPQTTRNNIQTILTGEEYQIVFVDTPGMHNPRHKLGEYMVKVAKESMNEVDVALFVTTPDVEVKRGDLHILEQLKSAKVPVFLVVNKIDETTEERLAATLKNYSEAFEFQEIIPISAQKGKNVDKLIELMVKHLNEGPKYYPDDMIIDKQERFIIAEIIREKALRFLSQEVPHGIAVEILQMKEENEKYKIEATIMCEKDSHKGIIIGKGGEMLKKISQSARKSAEKFLDKRVNMKIWVKVKKDWRDSPFVLGELGYKAPKK.

The region spanning 3–170 (KSGFVTIIGR…IELMVKHLNE (168 aa)) is the Era-type G domain. The G1 stretch occupies residues 11–18 (GRPNVGKS). Position 11–18 (11–18 (GRPNVGKS)) interacts with GTP. The interval 37–41 (QTTRN) is G2. Residues 58 to 61 (DTPG) form a G3 region. GTP-binding positions include 58–62 (DTPGM) and 120–123 (NKID). Residues 120-123 (NKID) are G4. Positions 149 to 151 (ISA) are G5. The KH type-2 domain occupies 201 to 277 (LSQEVPHGIA…NMKIWVKVKK (77 aa)).

This sequence belongs to the TRAFAC class TrmE-Era-EngA-EngB-Septin-like GTPase superfamily. Era GTPase family. In terms of assembly, monomer.

The protein resides in the cytoplasm. It localises to the cell membrane. In terms of biological role, an essential GTPase that binds both GDP and GTP, with rapid nucleotide exchange. Plays a role in 16S rRNA processing and 30S ribosomal subunit biogenesis and possibly also in cell cycle regulation and energy metabolism. The protein is GTPase Era of Clostridium acetobutylicum (strain ATCC 824 / DSM 792 / JCM 1419 / IAM 19013 / LMG 5710 / NBRC 13948 / NRRL B-527 / VKM B-1787 / 2291 / W).